Reading from the N-terminus, the 429-residue chain is Phosphoribosylamine--glycine ligase (429 aa).

Residues 109–316 (KDFLARHNIP…LVELCLAACE (208 aa)) form the ATP-grasp domain. Position 135–196 (135–196 (LREKGAPIVI…EEFLDGEEAS (62 aa))) interacts with ATP. Residues 212 to 237 (SQDHKRVGDKDTGPNTGGMGAYSPAP) form a disordered region. Residues 213 to 223 (QDHKRVGDKDT) are compositionally biased toward basic and acidic residues. 2 residues coordinate Mg(2+): Glu-286 and Asn-288.

It belongs to the GARS family. As to quaternary structure, monomer. Requires Mg(2+) as cofactor. The cofactor is Mn(2+).

The enzyme catalyses 5-phospho-beta-D-ribosylamine + glycine + ATP = N(1)-(5-phospho-beta-D-ribosyl)glycinamide + ADP + phosphate + H(+). It functions in the pathway purine metabolism; IMP biosynthesis via de novo pathway; N(1)-(5-phospho-D-ribosyl)glycinamide from 5-phospho-alpha-D-ribose 1-diphosphate: step 2/2. This Escherichia coli O157:H7 protein is Phosphoribosylamine--glycine ligase.